Consider the following 219-residue polypeptide: Uracil-DNA glycosylase (219 aa).

Asp-64 functions as the Proton acceptor in the catalytic mechanism.

The protein belongs to the uracil-DNA glycosylase (UDG) superfamily. UNG family.

Its subcellular location is the cytoplasm. The enzyme catalyses Hydrolyzes single-stranded DNA or mismatched double-stranded DNA and polynucleotides, releasing free uracil.. Its function is as follows. Excises uracil residues from the DNA which can arise as a result of misincorporation of dUMP residues by DNA polymerase or due to deamination of cytosine. The chain is Uracil-DNA glycosylase from Leuconostoc citreum (strain KM20).